Here is a 346-residue protein sequence, read N- to C-terminus: Annexin A1 (346 aa).

Alanine 2 carries the post-translational modification N-acetylalanine. Phosphoserine; by TRPM7 is present on serine 5. Glutamine 19 participates in a covalent cross-link: Isoglutamyl lysine isopeptide (Gln-Lys) (interchain with K-?). Tyrosine 21 is modified (phosphotyrosine; by EGFR). The tract at residues 25–47 (VKGSKGGPGSAVSPYPTFNPSSD) is disordered. 2 positions are modified to phosphoserine: serine 34 and serine 37. Threonine 41 carries the post-translational modification Phosphothreonine. 4 Annexin repeats span residues 42–113 (FNPS…ALLK), 114–185 (TPAQ…SLAK), 197–269 (DLAD…VVVK), and 273–344 (SKPM…ALCG). The residue at position 58 (lysine 58) is an N6-acetyllysine. Glycine 59, valine 60, glutamate 62, lysine 97, leucine 100, glutamate 105, methionine 127, glycine 129, glycine 131, threonine 132, and glutamate 134 together coordinate Ca(2+). The residue at position 136 (threonine 136) is a Phosphothreonine. 3 residues coordinate Ca(2+): aspartate 171, glycine 210, and arginine 213. A Glycyl lysine isopeptide (Lys-Gly) (interchain with G-Cter in SUMO1); alternate cross-link involves residue lysine 214. A Glycyl lysine isopeptide (Lys-Gly) (interchain with G-Cter in SUMO2); alternate cross-link involves residue lysine 214. Glycine 215 is a Ca(2+) binding site. Position 239 is an N6-acetyllysine (lysine 239). Residues aspartate 253, glutamate 255, and leucine 256 each coordinate Ca(2+). Lysine 257 participates in a covalent cross-link: Glycyl lysine isopeptide (Lys-Gly) (interchain with G-Cter in SUMO1). Glutamate 261, methionine 286, glycine 288, and glycine 290 together coordinate Ca(2+). An N6-acetyllysine modification is found at lysine 312. Cysteine 324 and cysteine 343 are oxidised to a cystine. Residues leucine 328, glutamate 330, and threonine 331 each coordinate Ca(2+). Residue lysine 332 forms a Glycyl lysine isopeptide (Lys-Gly) (interchain with G-Cter in SUMO1) linkage. Glutamate 336 contributes to the Ca(2+) binding site.

This sequence belongs to the annexin family. Homodimer; non-covalently linked. Homodimer; linked by transglutamylation. Homodimers linked by transglutamylation are observed in placenta, but not in other tissues. Interacts with S100A11. Heterotetramer, formed by two molecules each of S100A11 and ANXA1. Interacts with DYSF. Interacts with EGFR. Post-translationally, phosphorylated by EGFR. Phosphorylated by protein kinase C and TRPM7. Phosphorylated in response to EGF treatment. Sumoylated. In terms of processing, proteolytically cleaved by cathepsin CTSG to release the active N-terminal peptide Ac2-26. In terms of tissue distribution, detected in lung and spleen (at protein level).

The protein resides in the nucleus. It localises to the cytoplasm. The protein localises to the cell projection. Its subcellular location is the cilium. It is found in the basolateral cell membrane. The protein resides in the lateral cell membrane. It localises to the early endosome. The protein localises to the cell membrane. Its subcellular location is the cytoplasmic vesicle membrane. It is found in the apical cell membrane. The protein resides in the membrane. It localises to the endosome. The protein localises to the secreted. Its subcellular location is the extracellular space. It is found in the extracellular exosome. The protein resides in the cytoplasmic vesicle. It localises to the secretory vesicle lumen. The protein localises to the phagocytic cup. Plays important roles in the innate immune response as effector of glucocorticoid-mediated responses and regulator of the inflammatory process. Has anti-inflammatory activity. Plays a role in glucocorticoid-mediated down-regulation of the early phase of the inflammatory response. Contributes to the adaptive immune response by enhancing signaling cascades that are triggered by T-cell activation, regulates differentiation and proliferation of activated T-cells. Promotes the differentiation of T-cells into Th1 cells and negatively regulates differentiation into Th2 cells. Has no effect on unstimulated T-cells. Negatively regulates hormone exocytosis via activation of the formyl peptide receptors and reorganization of the actin cytoskeleton. Has high affinity for Ca(2+) and can bind up to eight Ca(2+) ions. Displays Ca(2+)-dependent binding to phospholipid membranes. Plays a role in the formation of phagocytic cups and phagosomes. Plays a role in phagocytosis by mediating the Ca(2+)-dependent interaction between phagosomes and the actin cytoskeleton. In terms of biological role, functions at least in part by activating the formyl peptide receptors and downstream signaling cascades. Promotes chemotaxis of granulocytes and monocytes via activation of the formyl peptide receptors. Promotes rearrangement of the actin cytoskeleton, cell polarization and cell migration. Promotes resolution of inflammation and wound healing. Acts via neutrophil N-formyl peptide receptors to enhance the release of CXCL2. This Sus scrofa (Pig) protein is Annexin A1 (ANXA1).